The sequence spans 311 residues: Putative UPF0607 protein ENSP00000382826 (311 aa).

The span at 48–61 shows a compositional bias: basic and acidic residues; sequence AEEPKEATEVKDQV. Disordered regions lie at residues 48–99, 186–229, and 291–311; these read AEEP…WYNP, GLLM…PLQL, and RKQL…GSCL. The span at 78 to 97 shows a compositional bias: polar residues; it reads EAASTSRPLETQGNLTSSWY. Composition is skewed to basic residues over residues 213–222 and 291–305; these read AGHRSRKRKL and RKQL…RQGR.

The protein belongs to the UPF0607 family.

The polypeptide is Putative UPF0607 protein ENSP00000382826 (Homo sapiens (Human)).